The sequence spans 243 residues: uncharacterized protein (243 aa).

Residues 71-120 (KRTNVSQRNRKKGIKNNRPHKDINSSPDWGNAHRGTDWQSEKANGMNRAK) form a disordered region. Positions 78-88 (RNRKKGIKNNR) are enriched in basic residues. A Phosphoserine modification is found at serine 96.

This is an uncharacterized protein from Saccharomyces cerevisiae (strain ATCC 204508 / S288c) (Baker's yeast).